A 140-amino-acid chain; its full sequence is uncharacterized protein (140 aa).

The N-acetyltransferase domain occupies 2-140 (KAVIAKNEEQ…GIPHLQMMKD (139 aa)).

It belongs to the acetyltransferase family.

This is an uncharacterized protein from Bacillus subtilis (strain 168).